A 547-amino-acid chain; its full sequence is Chaperonin GroEL 2 (547 aa).

ATP-binding positions include 30–33, lysine 51, 87–91, glycine 415, 479–481, and aspartate 495; these read TLGP, DGTTT, and NAA. Residues 528 to 547 form a disordered region; the sequence is KPATAGLPHGGPGGFGGPEF. The span at 535–547 shows a compositional bias: gly residues; it reads PHGGPGGFGGPEF.

It belongs to the chaperonin (HSP60) family. As to quaternary structure, forms a cylinder of 14 subunits composed of two heptameric rings stacked back-to-back. Interacts with the co-chaperonin GroES.

Its subcellular location is the cytoplasm. It catalyses the reaction ATP + H2O + a folded polypeptide = ADP + phosphate + an unfolded polypeptide.. Its function is as follows. Together with its co-chaperonin GroES, plays an essential role in assisting protein folding. The GroEL-GroES system forms a nano-cage that allows encapsulation of the non-native substrate proteins and provides a physical environment optimized to promote and accelerate protein folding. The polypeptide is Chaperonin GroEL 2 (Azoarcus sp. (strain BH72)).